Here is a 442-residue protein sequence, read N- to C-terminus: tRNA modification GTPase MnmE (442 aa).

(6S)-5-formyl-5,6,7,8-tetrahydrofolate contacts are provided by R27, E84, and K124. The region spanning 221–366 is the TrmE-type G domain; that stretch reads GLHVVIVGAP…LLTNLQNFAE (146 aa). GTP contacts are provided by residues 231-236, 250-256, and 275-278; these read NAGKSS, SEEAGTT, and DTAG. Residues S235 and T256 each coordinate Mg(2+). K442 lines the (6S)-5-formyl-5,6,7,8-tetrahydrofolate pocket.

This sequence belongs to the TRAFAC class TrmE-Era-EngA-EngB-Septin-like GTPase superfamily. TrmE GTPase family. As to quaternary structure, homodimer. Heterotetramer of two MnmE and two MnmG subunits. K(+) is required as a cofactor.

The protein localises to the cytoplasm. Exhibits a very high intrinsic GTPase hydrolysis rate. Involved in the addition of a carboxymethylaminomethyl (cmnm) group at the wobble position (U34) of certain tRNAs, forming tRNA-cmnm(5)s(2)U34. The polypeptide is tRNA modification GTPase MnmE (Brucella anthropi (strain ATCC 49188 / DSM 6882 / CCUG 24695 / JCM 21032 / LMG 3331 / NBRC 15819 / NCTC 12168 / Alc 37) (Ochrobactrum anthropi)).